A 122-amino-acid chain; its full sequence is UPF0102 protein CE1920 (122 aa).

It belongs to the UPF0102 family.

The chain is UPF0102 protein CE1920 from Corynebacterium efficiens (strain DSM 44549 / YS-314 / AJ 12310 / JCM 11189 / NBRC 100395).